Consider the following 402-residue polypeptide: MNCVLTEARLVTMQPGVQGYQITEPQTLIIEQGRIQHIGQHIDLPSDAHPISCAGKLVTPGLIDCHTHLVYAGSRANEFELRLQGVPYQTIAAQGGGILSTVNATRKASEEALIELALPRLDGLLRSGVTSVEVKSGYGLTLKDELKMLRAAKALEQHRRVKITTTLLAAHALPPEFQGRSDDYIAHICQEIIPRVAEEQLATSVDVFCESIGFSVAQTERVFHAAQAHGLQIKGHTEQLSNLGGSALTARMGGLSVDHIEYLDEAGVKALAQSSTVATLLPGAFYFLRETQKPPIEWLRQYRVPMAISTDLNPGTSPFADLSLMMNMGCTLFDLTPEETLRAVTCHAAQALGYPANRGQIAEGYDADLAIWNIEHPAELSYQVGVSRLHARIVNGELSYES.

The Fe(3+) site is built by histidine 66 and histidine 68. Residues histidine 66 and histidine 68 each coordinate Zn(2+). 4-imidazolone-5-propanoate-binding residues include arginine 75, tyrosine 138, and histidine 171. Residue tyrosine 138 coordinates N-formimidoyl-L-glutamate. Histidine 236 serves as a coordination point for Fe(3+). A Zn(2+)-binding site is contributed by histidine 236. Glutamine 239 is a 4-imidazolone-5-propanoate binding site. Aspartate 311 contacts Fe(3+). Aspartate 311 contacts Zn(2+). Residues asparagine 313 and glycine 315 each contribute to the N-formimidoyl-L-glutamate site. Position 316 (threonine 316) interacts with 4-imidazolone-5-propanoate.

It belongs to the metallo-dependent hydrolases superfamily. HutI family. Zn(2+) serves as cofactor. The cofactor is Fe(3+).

It is found in the cytoplasm. The catalysed reaction is 4-imidazolone-5-propanoate + H2O = N-formimidoyl-L-glutamate. It participates in amino-acid degradation; L-histidine degradation into L-glutamate; N-formimidoyl-L-glutamate from L-histidine: step 3/3. Its function is as follows. Catalyzes the hydrolytic cleavage of the carbon-nitrogen bond in imidazolone-5-propanoate to yield N-formimidoyl-L-glutamate. It is the third step in the universal histidine degradation pathway. In Vibrio cholerae serotype O1 (strain ATCC 39541 / Classical Ogawa 395 / O395), this protein is Imidazolonepropionase.